The following is a 565-amino-acid chain: Polycomb protein EED (565 aa).

4 WD repeats span residues 89-133 (DDGN…LYRT), 136-176 (GHGG…EKQP), 185-224 (GHSYDLLSVAFHDNGRYVLSAGHDQVINLWALPEFPNEHM), and 240-278 (IHNNLVDCVAFYGDLILSRACHEDTIVLWRIEGFSSDDP). The segment at 417 to 488 (VKKAPGAAGS…SASPDPDSPF (72 aa)) is disordered. The span at 429 to 450 (GTAANGGHNNNNNNNNNNNNNN) shows a compositional bias: low complexity. Polar residues predominate over residues 451-468 (HETGSQRSFSATNNLSNS). A WD 5 repeat occupies 519 to 559 (IDGAFVGRQVGWSPEGEWCVVVGNGNRALIYQRWGKERGLG).

It belongs to the WD repeat ESC family. Component of the polycomb repressive complex 2 (PRC2) that consists of four core subunits icluding EZH2, EED, SUZ12, and RBBP4, among which EZH2 is the catalytic subunit and which minimally requires EED and SUZ12 for catalysis.

Its subcellular location is the nucleus. Functionally, component of the of the Polycomb Repressive Complex 2 (PRC2), a histone H3 lysine methyltransferase responsible for generating mono-, di-, and tri-methylation on Lys27 (H3K27me1, H3K27me2 and H3K27me3). The tri-methylated form is known to be critical in gene repression, and its proper placement is essential in defining repression patterns during development. EED is not a catalytic subunit but is required for the complex regulation of histone H3 lysine methylation by EZH2. In Chaetomium thermophilum (strain DSM 1495 / CBS 144.50 / IMI 039719) (Thermochaetoides thermophila), this protein is Polycomb protein EED.